We begin with the raw amino-acid sequence, 393 residues long: MKRTRDEVDATLQIAKLNAAELLPAVHCLGFGPGASGAAAGDFCLLELEPTLCQQLEDGHSLVIRGDKDEQAVLCSKDKTYDLKIADTSNMLLFIPGCKTPDQLKKEDSHCNIIHTEIFGFSNNYWELRRRRPKLKKLKKLLMENPYEGPDSQKEKDSNSSKYTTEDLLDQIQASEEEIMTQLQVLNACKIGGYWRILEFDYEMKLLNHVTQLVDSESWSFGKVPLNTCLQELGPLEPEEMIEHCLKCYGKKYVDEGEVYFELDADKICRAAARMLLQNAVKFNLAEFQEVWQQSVPEGMVTSLDQLKGLALVDRHSRPEIIFLLKVDDLPEDNQERFNSLFSLREKWTEEDIAPYIQDLCGEKQTIGALLTKYSHSSMQNGVKVYNSRRPIS.

The protein belongs to the DCC1 family. Component of the CTF18-RFC complex which consists of CTF8, CTF18, DSCC1 and the RFC complex. Interacts with CTF8 and CTF18. Interacts with DDX11.

It localises to the nucleus. Its function is as follows. Loads PCNA onto primed templates regulating velocity, spacing and restart activity of replication forks. May couple DNA replication to sister chromatid cohesion through regulation of the acetylation of the cohesin subunit SMC3. This chain is Sister chromatid cohesion protein DCC1 (DSCC1), found in Homo sapiens (Human).